The chain runs to 193 residues: dITP/XTP pyrophosphatase (193 aa).

A substrate-binding site is contributed by 7-12 (SENENK). Asp65 functions as the Proton acceptor in the catalytic mechanism. Position 65 (Asp65) interacts with Mg(2+). Substrate-binding positions include Ser66, 144–147 (FGYD), Lys167, and 172–173 (HR).

Belongs to the HAM1 NTPase family. In terms of assembly, homodimer. Requires Mg(2+) as cofactor.

It carries out the reaction XTP + H2O = XMP + diphosphate + H(+). It catalyses the reaction dITP + H2O = dIMP + diphosphate + H(+). The enzyme catalyses ITP + H2O = IMP + diphosphate + H(+). In terms of biological role, pyrophosphatase that catalyzes the hydrolysis of nucleoside triphosphates to their monophosphate derivatives, with a high preference for the non-canonical purine nucleotides XTP (xanthosine triphosphate), dITP (deoxyinosine triphosphate) and ITP. Seems to function as a house-cleaning enzyme that removes non-canonical purine nucleotides from the nucleotide pool, thus preventing their incorporation into DNA/RNA and avoiding chromosomal lesions. The sequence is that of dITP/XTP pyrophosphatase from Tropheryma whipplei (strain Twist) (Whipple's bacillus).